A 345-amino-acid polypeptide reads, in one-letter code: Dihydroorotase (345 aa).

The Zn(2+) site is built by His-13 and His-15. Residues 15–17 and Asn-41 each bind substrate; that span reads HFR. Zn(2+)-binding residues include Lys-98, His-135, and His-173. N6-carboxylysine is present on Lys-98. A substrate-binding site is contributed by His-135. Leu-218 is a substrate binding site. Residue Asp-246 coordinates Zn(2+). Asp-246 is an active-site residue. Residues His-250 and Ala-262 each coordinate substrate.

Belongs to the metallo-dependent hydrolases superfamily. DHOase family. Class II DHOase subfamily. In terms of assembly, homodimer. Zn(2+) is required as a cofactor.

The catalysed reaction is (S)-dihydroorotate + H2O = N-carbamoyl-L-aspartate + H(+). Its pathway is pyrimidine metabolism; UMP biosynthesis via de novo pathway; (S)-dihydroorotate from bicarbonate: step 3/3. Catalyzes the reversible cyclization of carbamoyl aspartate to dihydroorotate. The sequence is that of Dihydroorotase from Shewanella frigidimarina (strain NCIMB 400).